Reading from the N-terminus, the 165-residue chain is Protein NKG7 (165 aa).

4 helical membrane passes run 9–29 (LLGG…DFWF), 61–81 (FSIM…LSCF), 92–112 (LVST…MAVY), and 133–153 (FYLG…SLGA).

Belongs to the PMP-22/EMP/MP20 family. As to expression, expressed in activated T-cells, in kidney, liver, lung and pancreas. Not expressed in brain, heart, or skeletal muscle. Expressed at high levels in TCR gamma delta-expressing CTL clones, and in some TCR alpha beta-expressing CTL clones (both CD4+ and CD8+), but is not expressed in other TCR alpha beta-expressing CTL clones and in cell lines representing B-cells, monocytes, and myeloid cells.

It localises to the cell membrane. The protein resides in the cytolytic granule membrane. Regulates cytotoxic granule exocytosis in effector lymphocytes, thus acting as a critical mediator of inflammation in a broad range of infectious and non-infectious diseases. Essential for cytotoxic degranulation of natural killer (NK) cells and CD8(+) T-cells and for the activation of CD4(+) T-cells following infection. Plays a critical role in CD8(+) T-cell and NK cell-mediated cytolysis of target cells and contributes to the cytolytic activity via the perforin/granzyme pathway by enhancing exocytosis of LAMP1-carrying lytic granules. Contributes to NK cell-mediated control of cancer metastasis. This chain is Protein NKG7 (NKG7), found in Homo sapiens (Human).